Consider the following 414-residue polypeptide: MALKKFLEDIEHHFEPGGKHEKWFALYEAVATVFYTPGIVTNKSSHVRDSVDLKRIMIMVWFAVFPAMFWGMYNAGGQAIAALNHMYAGDQLATVISGNWHYWLTEMLGGTIAADAGVGSKMLLGATYFLPIYATVFLVGGFWEVLFCMVRKHEVNEGFFVTSILFALIVPPTLPLWQAALGITFGVVVAKEIFGGTGRNFLNPALAGRAFLFFAYPAQISGDVVWTAADGFSGATALSQWAQGGNGALVNTVTGSPITWMDAFIGNIPGSIGEVSTLALMIGAAMIVYMRIASWRIIAGVMIGMIAVSTLFNVIGSDTNPMFNMPWHWHLVLGGFAFGMFFMATDPVSASFTNKGKWWYGILIGAMCVMIRVVNPAYPEGMMLAILFANLFAPLFDHVVIEKNIKRRLARYGK.

The next 3 membrane-spanning stretches (helical) occupy residues 56–76 (IMIMVWFAVFPAMFWGMYNAG), 129–149 (FLPIYATVFLVGGFWEVLFCM), and 164–184 (ILFALIVPPTLPLWQAALGIT). Threonine 236 is subject to FMN phosphoryl threonine. The next 5 membrane-spanning stretches (helical) occupy residues 268–288 (IPGSIGEVSTLALMIGAAMIV), 297–317 (IIAGVMIGMIAVSTLFNVIGS), 325–345 (MPWHWHLVLGGFAFGMFFMAT), 358–378 (WWYGILIGAMCVMIRVVNPAY), and 381–401 (GMMLAILFANLFAPLFDHVVI).

It belongs to the NqrB/RnfD family. As to quaternary structure, composed of six subunits; NqrA, NqrB, NqrC, NqrD, NqrE and NqrF. FMN is required as a cofactor.

It is found in the cell inner membrane. The catalysed reaction is a ubiquinone + n Na(+)(in) + NADH + H(+) = a ubiquinol + n Na(+)(out) + NAD(+). This reaction is tightly coupled to the Na(+) pumping activity and specifically requires Na(+) for activity. Inhibited by korormicin and 2-N-heptyl-4-hydroxyquinoline N-oxide (HQNO). In terms of biological role, NQR complex catalyzes the reduction of ubiquinone-1 to ubiquinol by two successive reactions, coupled with the transport of Na(+) ions from the cytoplasm to the periplasm. NqrA to NqrE are probably involved in the second step, the conversion of ubisemiquinone to ubiquinol. The chain is Na(+)-translocating NADH-quinone reductase subunit B from Vibrio alginolyticus.